Consider the following 2595-residue polypeptide: Glucosylceramide transporter ABCA12 (2595 aa).

The helical transmembrane segment at 23-43 threads the bilayer; sequence PLWTLVLILWPVIIFIILAIT. N-linked (GlcNAc...) asparagine glycans are attached at residues N156, N174, N214, N275, N333, N367, N383, N412, N435, N528, N543, N577, N608, N623, N648, N752, N826, N920, and N963. The next 3 helical transmembrane spans lie at 1065–1085, 1112–1132, and 1145–1165; these read VSYSLPIVLMVAWVVFIAAFV, FAWLIESVGFLLVTIVILIII, and FILFLYFSDYSFSVIAMSYLI. N1170 carries an N-linked (GlcNAc...) asparagine glycan. 3 helical membrane passes run 1174 to 1194, 1200 to 1220, and 1250 to 1270; these read IAALIGSLIYIIAFFPFIVLV, LSYVLKVFMSLLSPTAFSYAS, and FGWLCCLILADSFIYFLIAWY. The ABC transporter 1 domain occupies 1346–1577; that stretch reads VALHGVTKIY…FGDGYHLTLT (232 aa). 1378–1385 contacts ATP; sequence GPNGAGKT. 3 N-linked (GlcNAc...) asparagine glycosylation sites follow: N1524, N1663, and N1704. A helical transmembrane segment spans residues 1747–1767; sequence LIAQVILPIVFVTTAMGLGTL. N1769, N1819, N1835, N1876, N1921, and N1952 each carry an N-linked (GlcNAc...) asparagine glycan. Helical transmembrane passes span 1979–1999, 2035–2055, 2072–2092, and 2103–2123; these read ATISSLIDILVALSILMGYSV, FIYDMVFYLVPVAFSIGIIAI, LLLLLFGYATFSWMYLLAGLF, and VCVNLFFGINSIVSLSVVYFL. Residue N2178 is glycosylated (N-linked (GlcNAc...) asparagine). Residues 2187–2207 traverse the membrane as a helical segment; sequence GAMFVALVSQGTMFFSLRLLI. 2 N-linked (GlcNAc...) asparagine glycosylation sites follow: N2208 and N2223. One can recognise an ABC transporter 2 domain in the interval 2254–2489; it reads VQLYCLTKTY…FGRGFTVKVH (236 aa). The helical transmembrane segment at 2270-2290 threads the bilayer; the sequence is IIAVNNISIGIPAGECFGLLG. Position 2290 to 2297 (2290 to 2297) interacts with ATP; sequence GVNGAGKT. N-linked (GlcNAc...) asparagine glycans are attached at residues N2318, N2542, and N2547. The interval 2571–2595 is disordered; that stretch reads SYETADTSSQGSTISVDSQDDQMES. The span at 2574-2587 shows a compositional bias: polar residues; sequence TADTSSQGSTISVD.

The protein belongs to the ABC transporter superfamily. ABCA family. As to quaternary structure, interacts with NR1H2 and ABCA1; this interaction is required for ABCA1 localization to the cell surface and is necessary for its normal activity and stability. Mainly expressed in the stomach, placenta, testis and fetal brain. Expressed in the upper epidermal layers, mainly the granular layers, of skin. Expressed throughout the normal interfollicular epidermis with prominent expression in the stratum granulosum. Expressed in alpha and beta cells of pancreatic islets.

It localises to the cytoplasmic vesicle. The protein resides in the secretory vesicle membrane. Its subcellular location is the golgi apparatus membrane. The catalysed reaction is ATP + H2O + phospholipidSide 1 = ADP + phosphate + phospholipidSide 2.. The enzyme catalyses a beta-D-glucosylceramide(in) + ATP + H2O = a beta-D-glucosylceramide(out) + ADP + phosphate + H(+). Its function is as follows. Transports lipids such as glucosylceramides from the outer to the inner leaflet of lamellar granules (LGs) membrane, whereby the lipids are finally transported to the keratinocyte periphery via the trans-Golgi network and LGs and released to the apical surface of the granular keratinocytes to form lipid lamellae in the stratum corneum of the epidermis, which is essential for skin barrier function. In the meantime, participates in the transport of the lamellar granules-associated proteolytic enzymes, in turn regulates desquamation and keratinocyte differentiation. Furthermore, is essential for the regulation of cellular cholesterol homeostasis by regulating ABCA1-dependent cholesterol efflux from macrophages through interaction with NR1H2 and ABCA1. Plays pleiotropic roles in regulating glucose stimulated insulin secretion from beta cells, regulating the morphology and fusion of insulin granules, lipid raft abundance and the actin cytoskeleton. Also involved in lung surfactant biogenesis. The chain is Glucosylceramide transporter ABCA12 from Homo sapiens (Human).